A 79-amino-acid polypeptide reads, in one-letter code: Acyl carrier protein (79 aa).

A Carrier domain is found at 2–77 (ESIEQRVKKI…QAVDYINSHG (76 aa)). Position 37 is an O-(pantetheine 4'-phosphoryl)serine (S37).

It belongs to the acyl carrier protein (ACP) family. 4'-phosphopantetheine is transferred from CoA to a specific serine of apo-ACP by AcpS. This modification is essential for activity because fatty acids are bound in thioester linkage to the sulfhydryl of the prosthetic group.

It localises to the cytoplasm. The protein operates within lipid metabolism; fatty acid biosynthesis. Carrier of the growing fatty acid chain in fatty acid biosynthesis. The sequence is that of Acyl carrier protein from Bordetella parapertussis (strain 12822 / ATCC BAA-587 / NCTC 13253).